A 643-amino-acid chain; its full sequence is 1-deoxy-D-xylulose-5-phosphate synthase (643 aa).

Thiamine diphosphate contacts are provided by residues His72 and 113 to 115; that span reads GHA. Position 144 (Asp144) interacts with Mg(2+). Thiamine diphosphate contacts are provided by residues 145–146, Asn174, Tyr287, and Glu370; that span reads GA. Asn174 contacts Mg(2+).

The protein belongs to the transketolase family. DXPS subfamily. In terms of assembly, homodimer. It depends on Mg(2+) as a cofactor. Thiamine diphosphate is required as a cofactor.

The enzyme catalyses D-glyceraldehyde 3-phosphate + pyruvate + H(+) = 1-deoxy-D-xylulose 5-phosphate + CO2. It participates in metabolic intermediate biosynthesis; 1-deoxy-D-xylulose 5-phosphate biosynthesis; 1-deoxy-D-xylulose 5-phosphate from D-glyceraldehyde 3-phosphate and pyruvate: step 1/1. In terms of biological role, catalyzes the acyloin condensation reaction between C atoms 2 and 3 of pyruvate and glyceraldehyde 3-phosphate to yield 1-deoxy-D-xylulose-5-phosphate (DXP). The protein is 1-deoxy-D-xylulose-5-phosphate synthase of Parasynechococcus marenigrum (strain WH8102).